An 865-amino-acid polypeptide reads, in one-letter code: MLEEYRKHVAERAAEGIAPKPLDANQMAALVELLKNPPAGEEEFLLDLLTNRVPPGVDEAAYVKAGFLAAIAKGEAKSPLLTPEKAIELLGTMQGGYNIHPLIDALDDAKLAPIAAKALSHTLLMFDNFYDVEEKAKAGNEYAKQVMQSWADAEWFLNRPALAEKLTVTVFKVTGETNTDDLSPAPDAWSRPDIPLHALAMLKNAREGIEPDQPGVVGPIKQIEALQQKGFPLAYVGDVVGTGSSRKSATNSVLWFMGDDIPHVPNKRGGGLCLGGKIAPIFFNTMEDAGALPIEVDVSNLNMGDVIDVYPYKGEVRNHETGELLATFELKTDVLIDEVRAGGRIPLIIGRGLTTKAREALGLPHSDVFRQAKDVAESDRGFSLAQKMVGRACGVKGIRPGAYCEPKMTSVGSQDTTGPMTRDELKDLACLGFSADLVMQSFCHTAAYPKPVDVNTHHTLPDFIMNRGGVSLRPGDGVIHSWLNRMLLPDTVGTGGDSHTRFPIGISFPAGSGLVAFAAATGVMPLDMPESVLVRFKGKMQPGITLRDLVHAIPLYAIKQGLLTVEKKGKKNIFSGRILEIEGLPDLKVEQAFELTDASAERSAAGCTIKLNKEPIIEYLNSNIVLLKWMIAEGYGDRRTLERRIQGMEKWLANPELLEADADAEYAAVIDIDLADIKEPILCAPNDPDDARPLSAVQGEKIDEVFIGSCMTNIGHFRAAGKLLDAHKGQLPTRLWVAPPTRMDAAQLTEEGYYSVFGKSGARIEIPGCSLCMGNQARVADGATVVSTSTRNFPNRLGTGANVFLASAELAAVAALIGKLPTPEEYQTYVAQVDKTAVDTYRYLNFNQLSQYTEKADGVIFQTAV.

Residues Arg191, Ser244–Arg246, Gln414–Thr416, and Ser498 each bind substrate. [4Fe-4S] cluster is bound by residues Cys710, Cys769, and Cys772. Residues Arg791 and Arg796 each coordinate substrate.

Belongs to the aconitase/IPM isomerase family. As to quaternary structure, monomer. AcnB can also form a homodimer. The monomer-homodimer transition is dependent on iron availability and the carboxymethylation of C-273 inhibits the dimer formation. It depends on [4Fe-4S] cluster as a cofactor.

It catalyses the reaction citrate = D-threo-isocitrate. It carries out the reaction (2S,3R)-3-hydroxybutane-1,2,3-tricarboxylate = 2-methyl-cis-aconitate + H2O. It participates in organic acid metabolism; propanoate degradation. The protein operates within carbohydrate metabolism; tricarboxylic acid cycle; isocitrate from oxaloacetate: step 2/2. Involved in the catabolism of short chain fatty acids (SCFA) via the tricarboxylic acid (TCA)(acetyl degradation route) and the 2-methylcitrate cycle I (propionate degradation route). Catalyzes the reversible isomerization of citrate to isocitrate via cis-aconitate. Also catalyzes the hydration of 2-methyl-cis-aconitate to yield (2R,3S)-2-methylisocitrate. The apo form of AcnB functions as a RNA-binding regulatory protein. During oxidative stress inactive AcnB apo-enzyme without iron sulfur clusters binds the acnB mRNA 3' UTRs (untranslated regions), stabilizes acnB mRNA and increases AcnB synthesis, thus mediating a post-transcriptional positive autoregulatory switch. AcnB also decreases the stability of the sodA transcript. The protein is Aconitate hydratase B of Escherichia coli (strain K12).